The following is a 258-amino-acid chain: Thiazole synthase (258 aa).

K98 serves as the catalytic Schiff-base intermediate with DXP. Residues G159, 185–186 (AG), and 207–208 (NT) contribute to the 1-deoxy-D-xylulose 5-phosphate site.

This sequence belongs to the ThiG family. As to quaternary structure, homotetramer. Forms heterodimers with either ThiH or ThiS.

The protein localises to the cytoplasm. The catalysed reaction is [ThiS sulfur-carrier protein]-C-terminal-Gly-aminoethanethioate + 2-iminoacetate + 1-deoxy-D-xylulose 5-phosphate = [ThiS sulfur-carrier protein]-C-terminal Gly-Gly + 2-[(2R,5Z)-2-carboxy-4-methylthiazol-5(2H)-ylidene]ethyl phosphate + 2 H2O + H(+). The protein operates within cofactor biosynthesis; thiamine diphosphate biosynthesis. In terms of biological role, catalyzes the rearrangement of 1-deoxy-D-xylulose 5-phosphate (DXP) to produce the thiazole phosphate moiety of thiamine. Sulfur is provided by the thiocarboxylate moiety of the carrier protein ThiS. In vitro, sulfur can be provided by H(2)S. The chain is Thiazole synthase from Bacillus cereus (strain ZK / E33L).